A 339-amino-acid chain; its full sequence is D-erythrose-4-phosphate dehydrogenase (339 aa).

Position 12–13 (12–13 (RI)) interacts with NAD(+). Substrate is bound by residues 154–156 (SCT), Arg200, 213–214 (TK), and Arg236. Cys155 serves as the catalytic Nucleophile. Asn318 lines the NAD(+) pocket.

This sequence belongs to the glyceraldehyde-3-phosphate dehydrogenase family. Epd subfamily. In terms of assembly, homotetramer.

Its subcellular location is the cytoplasm. It catalyses the reaction D-erythrose 4-phosphate + NAD(+) + H2O = 4-phospho-D-erythronate + NADH + 2 H(+). Its pathway is cofactor biosynthesis; pyridoxine 5'-phosphate biosynthesis; pyridoxine 5'-phosphate from D-erythrose 4-phosphate: step 1/5. Its function is as follows. Catalyzes the NAD-dependent conversion of D-erythrose 4-phosphate to 4-phosphoerythronate. In Proteus mirabilis (strain HI4320), this protein is D-erythrose-4-phosphate dehydrogenase.